Here is a 230-residue protein sequence, read N- to C-terminus: LexA repressor (230 aa).

A DNA-binding region (H-T-H motif) is located at residues 28–48 (IREIGEALDIRSTNGVNDHLK). Catalysis depends on for autocatalytic cleavage activity residues Ser-148 and Lys-185.

The protein belongs to the peptidase S24 family. Homodimer.

It carries out the reaction Hydrolysis of Ala-|-Gly bond in repressor LexA.. In terms of biological role, represses a number of genes involved in the response to DNA damage (SOS response), including recA and lexA. In the presence of single-stranded DNA, RecA interacts with LexA causing an autocatalytic cleavage which disrupts the DNA-binding part of LexA, leading to derepression of the SOS regulon and eventually DNA repair. The chain is LexA repressor from Anaeromyxobacter sp. (strain K).